A 492-amino-acid chain; its full sequence is Ketol-acid reductoisomerase (NADP(+)) (492 aa).

The 195-residue stretch at 14 to 208 (LDQLGKCRFM…GGHRAGVLQS (195 aa)) folds into the KARI N-terminal Rossmann domain. Residues 45–48 (CGAQ), R68, R76, S78, and 108–110 (DKQ) each bind NADP(+). H132 is a catalytic residue. G158 contributes to the NADP(+) binding site. KARI C-terminal knotted domains are found at residues 209–344 (SFVA…NAPQ) and 345–485 (FDGK…MKDM). Positions 217, 221, 389, and 393 each coordinate Mg(2+). S414 provides a ligand contact to substrate.

It belongs to the ketol-acid reductoisomerase family. Requires Mg(2+) as cofactor.

The enzyme catalyses (2R)-2,3-dihydroxy-3-methylbutanoate + NADP(+) = (2S)-2-acetolactate + NADPH + H(+). It carries out the reaction (2R,3R)-2,3-dihydroxy-3-methylpentanoate + NADP(+) = (S)-2-ethyl-2-hydroxy-3-oxobutanoate + NADPH + H(+). The protein operates within amino-acid biosynthesis; L-isoleucine biosynthesis; L-isoleucine from 2-oxobutanoate: step 2/4. It participates in amino-acid biosynthesis; L-valine biosynthesis; L-valine from pyruvate: step 2/4. Involved in the biosynthesis of branched-chain amino acids (BCAA). Catalyzes an alkyl-migration followed by a ketol-acid reduction of (S)-2-acetolactate (S2AL) to yield (R)-2,3-dihydroxy-isovalerate. In the isomerase reaction, S2AL is rearranged via a Mg-dependent methyl migration to produce 3-hydroxy-3-methyl-2-ketobutyrate (HMKB). In the reductase reaction, this 2-ketoacid undergoes a metal-dependent reduction by NADPH to yield (R)-2,3-dihydroxy-isovalerate. This is Ketol-acid reductoisomerase (NADP(+)) from Pectobacterium carotovorum subsp. carotovorum (strain PC1).